The primary structure comprises 277 residues: Large ribosomal subunit protein uL2 (277 aa).

Positions 222–277 (GVAMNPVDHPHGGGEGRTSGGRHPVTPWGKPTKGKKTRSNKATDKFIMRSRHQRKK) are disordered.

Belongs to the universal ribosomal protein uL2 family. In terms of assembly, part of the 50S ribosomal subunit. Forms a bridge to the 30S subunit in the 70S ribosome.

One of the primary rRNA binding proteins. Required for association of the 30S and 50S subunits to form the 70S ribosome, for tRNA binding and peptide bond formation. It has been suggested to have peptidyltransferase activity; this is somewhat controversial. Makes several contacts with the 16S rRNA in the 70S ribosome. In Brucella melitensis biotype 1 (strain ATCC 23456 / CCUG 17765 / NCTC 10094 / 16M), this protein is Large ribosomal subunit protein uL2.